Reading from the N-terminus, the 403-residue chain is Coenzyme A biosynthesis bifunctional protein CoaBC (403 aa).

The phosphopantothenoylcysteine decarboxylase stretch occupies residues 1–197; sequence MLHHVKLIYA…LHPKSLEGKR (197 aa). A phosphopantothenate--cysteine ligase region spans residues 198–403; that stretch reads VLVTAGATRE…RLWDEIEKML (206 aa). Asp-287, Lys-297, and Phe-330 together coordinate CTP.

In the N-terminal section; belongs to the HFCD (homo-oligomeric flavin containing Cys decarboxylase) superfamily. This sequence in the C-terminal section; belongs to the PPC synthetase family. Mg(2+) is required as a cofactor. It depends on FMN as a cofactor.

The catalysed reaction is N-[(R)-4-phosphopantothenoyl]-L-cysteine + H(+) = (R)-4'-phosphopantetheine + CO2. It catalyses the reaction (R)-4'-phosphopantothenate + L-cysteine + CTP = N-[(R)-4-phosphopantothenoyl]-L-cysteine + CMP + diphosphate + H(+). The protein operates within cofactor biosynthesis; coenzyme A biosynthesis. Its function is as follows. Catalyzes two sequential steps in the biosynthesis of coenzyme A. In the first step cysteine is conjugated to 4'-phosphopantothenate to form 4-phosphopantothenoylcysteine. In the second step the latter compound is decarboxylated to form 4'-phosphopantotheine. The sequence is that of Coenzyme A biosynthesis bifunctional protein CoaBC from Thermococcus kodakarensis (strain ATCC BAA-918 / JCM 12380 / KOD1) (Pyrococcus kodakaraensis (strain KOD1)).